The chain runs to 171 residues: 3-hydroxydecanoyl-[acyl-carrier-protein] dehydratase (171 aa).

H70 is an active-site residue.

The protein belongs to the thioester dehydratase family. FabA subfamily. In terms of assembly, homodimer.

Its subcellular location is the cytoplasm. It catalyses the reaction a (3R)-hydroxyacyl-[ACP] = a (2E)-enoyl-[ACP] + H2O. It carries out the reaction (3R)-hydroxydecanoyl-[ACP] = (2E)-decenoyl-[ACP] + H2O. The enzyme catalyses (2E)-decenoyl-[ACP] = (3Z)-decenoyl-[ACP]. It participates in lipid metabolism; fatty acid biosynthesis. Functionally, necessary for the introduction of cis unsaturation into fatty acids. Catalyzes the dehydration of (3R)-3-hydroxydecanoyl-ACP to E-(2)-decenoyl-ACP and then its isomerization to Z-(3)-decenoyl-ACP. Can catalyze the dehydratase reaction for beta-hydroxyacyl-ACPs with saturated chain lengths up to 16:0, being most active on intermediate chain length. The chain is 3-hydroxydecanoyl-[acyl-carrier-protein] dehydratase from Pseudomonas aeruginosa (strain LESB58).